We begin with the raw amino-acid sequence, 359 residues long: MKPALRLQLDRYVRRLAELDSLLADPAVMRDAGGFRALSREHVEVSGIVERQRRHAQRERDLAAAAEMASDPELAAMAAEEAASAQAELDRLATELQRLLLPRDPDDARSVFLEIRAGTGGDESALFAGDLLRMYTRYAERKGWRVELLSASDSELGGYKEVVARIEGDAVFGHLKYESGGHRVQRVPATETQGRIHTSACTVAVLAEPDEAQEVTLNPADLRIDTYRASGAGGQHVNKTDSAVRITHLPTGLVAECQDDRSQHRNKAKAMAVLAARLRDKDRLERQAREAATRKSLIGSGDRSDRIRTYNFPQGRLTDHRINLTLYQLGAIMDGDLDPVVKALVAAREAELLAELEIG.

Gln-235 carries the post-translational modification N5-methylglutamine.

It belongs to the prokaryotic/mitochondrial release factor family. Methylated by PrmC. Methylation increases the termination efficiency of RF1.

It is found in the cytoplasm. Peptide chain release factor 1 directs the termination of translation in response to the peptide chain termination codons UAG and UAA. The polypeptide is Peptide chain release factor 1 (Methylibium petroleiphilum (strain ATCC BAA-1232 / LMG 22953 / PM1)).